The primary structure comprises 249 residues: 1-(5-phosphoribosyl)-5-[(5-phosphoribosylamino)methylideneamino] imidazole-4-carboxamide isomerase (249 aa).

The Proton acceptor role is filled by D8. D130 acts as the Proton donor in catalysis.

Belongs to the HisA/HisF family.

The protein resides in the cytoplasm. It carries out the reaction 1-(5-phospho-beta-D-ribosyl)-5-[(5-phospho-beta-D-ribosylamino)methylideneamino]imidazole-4-carboxamide = 5-[(5-phospho-1-deoxy-D-ribulos-1-ylimino)methylamino]-1-(5-phospho-beta-D-ribosyl)imidazole-4-carboxamide. It functions in the pathway amino-acid biosynthesis; L-histidine biosynthesis; L-histidine from 5-phospho-alpha-D-ribose 1-diphosphate: step 4/9. The chain is 1-(5-phosphoribosyl)-5-[(5-phosphoribosylamino)methylideneamino] imidazole-4-carboxamide isomerase from Chromohalobacter salexigens (strain ATCC BAA-138 / DSM 3043 / CIP 106854 / NCIMB 13768 / 1H11).